The chain runs to 310 residues: DNA damage-repair/toleration protein DRT102 (310 aa).

Position 2 is an N-acetylalanine (A2). In terms of domain architecture, Cupin type-2 spans 219–282 (IVRFKAGSVE…HRVKYHEDTE (64 aa)).

This Arabidopsis thaliana (Mouse-ear cress) protein is DNA damage-repair/toleration protein DRT102 (DRT102).